A 185-amino-acid chain; its full sequence is Large ribosomal subunit protein uL5 (185 aa).

The protein belongs to the universal ribosomal protein uL5 family. In terms of assembly, part of the 50S ribosomal subunit; part of the 5S rRNA/L5/L18/L25 subcomplex. Contacts the 5S rRNA and the P site tRNA. Forms a bridge to the 30S subunit in the 70S ribosome.

This is one of the proteins that bind and probably mediate the attachment of the 5S RNA into the large ribosomal subunit, where it forms part of the central protuberance. In the 70S ribosome it contacts protein S13 of the 30S subunit (bridge B1b), connecting the 2 subunits; this bridge is implicated in subunit movement. Contacts the P site tRNA; the 5S rRNA and some of its associated proteins might help stabilize positioning of ribosome-bound tRNAs. The chain is Large ribosomal subunit protein uL5 from Bacteroides fragilis (strain ATCC 25285 / DSM 2151 / CCUG 4856 / JCM 11019 / LMG 10263 / NCTC 9343 / Onslow / VPI 2553 / EN-2).